The sequence spans 170 residues: Myosin regulatory light chain 2 (170 aa).

The span at 1-13 shows a compositional bias: basic residues; that stretch reads MSKAAKKKSSKKR. The tract at residues 1–22 is disordered; sequence MSKAAKKKSSKKRSGSEAAQFD. EF-hand domains are found at residues 24–59 and 93–128; these read KTIQ…MGQI and DPEA…KRGE. Residues aspartate 37, asparagine 39, aspartate 41, and aspartate 48 each coordinate Ca(2+).

As to quaternary structure, myosin is a hexamer of 2 heavy chains and 4 light chains (two regulatory light chains and two essential light chains).

This chain is Myosin regulatory light chain 2 (mlc-2), found in Caenorhabditis elegans.